The chain runs to 280 residues: Trypsin zeta (280 aa).

The signal sequence occupies residues 1–22 (MSSSWIVGLLAFLVSLVALTQG). The propeptide at 23-38 (LPLLEDLDEKSVPDGR) is activation peptide. Positions 39 to 278 (IVGGYATDIA…LRPWIDAVLA (240 aa)) constitute a Peptidase S1 domain. Cys72 and Cys88 are oxidised to a cystine. Catalysis depends on charge relay system residues His87 and Asp134. 2 disulfide bridges follow: Cys198–Cys218 and Cys230–Cys254. The active-site Charge relay system is Ser234.

The protein belongs to the peptidase S1 family.

The protein localises to the secreted. Its subcellular location is the extracellular space. It carries out the reaction Preferential cleavage: Arg-|-Xaa, Lys-|-Xaa.. The chain is Trypsin zeta (zetaTry) from Drosophila melanogaster (Fruit fly).